Reading from the N-terminus, the 228-residue chain is MFDFGLGELVFVGIIALIVLGPERLPEAARTAGRLIGRLQRFVGSVKQEFDTQIELEELRKAKQEFEAAAAQVRDSLKETGTDMEGNLHDISDGLKPWEKLPEQRTPADFGVDENGNPLPDAANTLSDGISDVMPSERSYASAETLGDSGQTGSTAEPAETDQDRAWREYLTASAAAPVVQTVEVSYIDTAVETPVPHTTSLRKQAISRKRDFRPKHRAKPKLRVRKS.

A helical transmembrane segment spans residues 1–21 (MFDFGLGELVFVGIIALIVLG). 2 disordered regions span residues 109-162 (DFGV…AETD) and 197-228 (PHTTSLRKQAISRKRDFRPKHRAKPKLRVRKS). Positions 206–228 (AISRKRDFRPKHRAKPKLRVRKS) are enriched in basic residues.

Belongs to the TatB family. In terms of assembly, the Tat system comprises two distinct complexes: a TatABC complex, containing multiple copies of TatA, TatB and TatC subunits, and a separate TatA complex, containing only TatA subunits. Substrates initially bind to the TatABC complex, which probably triggers association of the separate TatA complex to form the active translocon.

The protein resides in the cell inner membrane. In terms of biological role, part of the twin-arginine translocation (Tat) system that transports large folded proteins containing a characteristic twin-arginine motif in their signal peptide across membranes. Together with TatC, TatB is part of a receptor directly interacting with Tat signal peptides. TatB may form an oligomeric binding site that transiently accommodates folded Tat precursor proteins before their translocation. In Neisseria meningitidis serogroup B (strain ATCC BAA-335 / MC58), this protein is Sec-independent protein translocase protein TatB.